The sequence spans 20 residues: Hemocyanin subunit 6 (20 aa).

Belongs to the tyrosinase family. Hemocyanin subfamily. In terms of tissue distribution, hemolymph.

It localises to the secreted. Its subcellular location is the extracellular space. In terms of biological role, hemocyanins are copper-containing oxygen carriers occurring freely dissolved in the hemolymph of many mollusks and arthropods. In Homarus americanus (American lobster), this protein is Hemocyanin subunit 6.